Reading from the N-terminus, the 619-residue chain is MALLQIAEPGLSAAPHQHRLAVGIDLGTTNSLVATVRSGAATVLPDEHGYHLLPSVVRYTEDGATEVGYAARAHQSDDPHNTVVSVKRFMGRGLSDLADAAATPYRFVDAPGMVRLVTRQGEKSPVEVSADILRALKARAESSLGGELTGAVITVPAYFDDAQRQATKDAARLAGLNVLRLLNEPTAAAIAYGLDNAAEGTYVVYDLGGGTFDVSILRLTRGVFEVLATSGDSALGGDDFDHRIYCWLLEKAGLSQLPDGDIRRLLTLARAAKEHLTDNTSARINTVLSDRQVIDLELSRDELAAITRTLVDKTLLPVRRALRDARISVDDVKGVVLVGGATRMPQVRRAVGDFFKRPPLTNLDPDQVVAIGAAMQANVLAGNKGEDDWLLLDVTPLSLGLETMGGLVEKIIPRNSTIPTARAQEFTTFKDGQTAMAVHVLQGERELVSDCRSLARFELRGIPPMVAGAARIRVTFQVDADGLLSVAAREQSSGVEASITIKPSYGLTDDQITQMLTDSLAHVKDDIAARKLREAVVDAESLIATTDAALKSDGDLLAPSELQAIDNAVAALRSAIAAQQTVAINAATARLNDATNDFASRRMDRNIRRALAGQKISDL.

It belongs to the heat shock protein 70 family.

Its function is as follows. Chaperone involved in the maturation of iron-sulfur cluster-containing proteins. Has a low intrinsic ATPase activity which is markedly stimulated by HscB. The chain is Chaperone protein HscA homolog from Laribacter hongkongensis (strain HLHK9).